Consider the following 255-residue polypeptide: Glioma pathogenesis-related protein 1 (255 aa).

Residues 1-17 form the signal peptide; sequence MQVILAVIVWMASSVSS. The SCP domain occupies 39–164; the sequence is QVHNQLRSKV…PNGANFICDY (126 aa). Residues 224 to 244 traverse the membrane as a helical segment; the sequence is SLFLIAKSVLLLLSVIITIWV.

This sequence belongs to the CRISP family.

Its subcellular location is the membrane. The sequence is that of Glioma pathogenesis-related protein 1 (Glipr1) from Mus musculus (Mouse).